We begin with the raw amino-acid sequence, 364 residues long: Zinc finger protein CONSTANS-LIKE 12 (364 aa).

The Zn(2+) site is built by Cys-5, Cys-8, Cys-28, and His-33. The B box-type 1; atypical zinc-finger motif lies at 5-47; the sequence is CDHCATSQALIYCKSDLAKLCLNCDVHVHSANPLSHRHIRSLI. The segment at 48-88 adopts a B box-type 2; degenerate zinc-finger fold; it reads CEKCFSQPAAIRCLDEKVSYCQGCHWHESNCSELGHRVQSL. Residues 280–322 form the CCT domain; sequence QDCGMSPGFIMSEAPWETNFEVSCPQARNEAKLRYKEKKLKRS.

It belongs to the CONSTANS family.

Its subcellular location is the nucleus. The sequence is that of Zinc finger protein CONSTANS-LIKE 12 (COL12) from Arabidopsis thaliana (Mouse-ear cress).